Reading from the N-terminus, the 304-residue chain is Probable phytol kinase 2, chloroplastic (304 aa).

Residues 1–59 constitute a chloroplast transit peptide; the sequence is MVSLISAHLLSLPSSAPRSRPQSRPPLSPPAAAAAASCSFDLPRPRRLVADGSRRKGTM. 7 consecutive transmembrane segments (helical) span residues 68 to 88, 113 to 133, 134 to 154, 170 to 190, 194 to 214, 231 to 251, and 256 to 276; these read SGLA…LALL, IGMV…APFL, AAVA…GVMK, ELLK…SIFW, PIAI…DIVG, AGSI…MHYF, and FIEE…TAAL.

It belongs to the polyprenol kinase family.

It is found in the plastid. The protein resides in the chloroplast membrane. The enzyme catalyses phytol + CTP = phytyl phosphate + CDP + H(+). Its pathway is cofactor biosynthesis; tocopherol biosynthesis. In terms of biological role, involved in the activation and reutilization of phytol from chlorophyll degradation in plant metabolism, including tocopherol biosynthesis. Catalyzes the conversion of phytol to phytol monophosphate (PMP). This chain is Probable phytol kinase 2, chloroplastic, found in Oryza sativa subsp. japonica (Rice).